The primary structure comprises 361 residues: PTI1-like tyrosine-protein kinase 1 (361 aa).

Residues glutamate 16 to glutamate 43 form a disordered region. Residues phenylalanine 68–leucine 350 enclose the Protein kinase domain. ATP contacts are provided by residues isoleucine 74–valine 82 and lysine 96. Aspartate 200 functions as the Proton acceptor in the catalytic mechanism.

It belongs to the protein kinase superfamily. Tyr protein kinase family. In terms of assembly, interacts with OXI1. In terms of processing, autophosphorylated and phosphorylated by OXI1.

It is found in the cell membrane. It carries out the reaction L-tyrosyl-[protein] + ATP = O-phospho-L-tyrosyl-[protein] + ADP + H(+). This Arabidopsis thaliana (Mouse-ear cress) protein is PTI1-like tyrosine-protein kinase 1 (PTI11).